The sequence spans 254 residues: Type III pantothenate kinase (254 aa).

ATP is bound at residue 6–13 (DVGNTNTV). Substrate-binding positions include tyrosine 100 and 107–110 (GADR). The active-site Proton acceptor is aspartate 109. Aspartate 129 contacts K(+). Residue threonine 132 participates in ATP binding. Threonine 184 contacts substrate.

It belongs to the type III pantothenate kinase family. As to quaternary structure, homodimer. NH4(+) is required as a cofactor. Requires K(+) as cofactor.

It localises to the cytoplasm. It carries out the reaction (R)-pantothenate + ATP = (R)-4'-phosphopantothenate + ADP + H(+). The protein operates within cofactor biosynthesis; coenzyme A biosynthesis; CoA from (R)-pantothenate: step 1/5. Catalyzes the phosphorylation of pantothenate (Pan), the first step in CoA biosynthesis. The protein is Type III pantothenate kinase of Anaeromyxobacter sp. (strain Fw109-5).